A 122-amino-acid chain; its full sequence is Large ribosomal subunit protein uL14 (122 aa).

This sequence belongs to the universal ribosomal protein uL14 family. As to quaternary structure, part of the 50S ribosomal subunit. Forms a cluster with proteins L3 and L19. In the 70S ribosome, L14 and L19 interact and together make contacts with the 16S rRNA in bridges B5 and B8.

Functionally, binds to 23S rRNA. Forms part of two intersubunit bridges in the 70S ribosome. The polypeptide is Large ribosomal subunit protein uL14 (Protochlamydia amoebophila (strain UWE25)).